The following is a 1243-amino-acid chain: Plasma membrane calcium-transporting ATPase 2 (1243 aa).

The span at 1-13 shows a compositional bias: polar residues; the sequence is MGDMTNSDFYSKN. The disordered stretch occupies residues 1–24; sequence MGDMTNSDFYSKNQRNESSHGGEF. The Cytoplasmic portion of the chain corresponds to 1-94; it reads MGDMTNSDFY…NFIPPKKPKT (94 aa). The residue at position 18 (serine 18) is a Phosphoserine. The helical transmembrane segment at 95–115 threads the bilayer; sequence FLQLVWEALQDVTLIILEIAA. The Extracellular segment spans residues 116-152; sequence IISLGLSFYHPPGEGNEGCATAQGGAEDEGEAEAGWI. The chain crosses the membrane as a helical span at residues 153-173; it reads EGAAILLSVICVVLVTAFNDW. The Cytoplasmic segment spans residues 174-390; that stretch reads SKEKQFRGLQ…KEKSVLQGKL (217 aa). The segment at 334–381 is disordered; that stretch reads GKMQDGNVDASQSKAKQQDGAAAMEMQPLKSAEGGDADDRKKASMHKK. Residues 391 to 410 form a helical membrane-spanning segment; that stretch reads TKLAVQIGKAGLVMSAITVI. Topologically, residues 411-443 are extracellular; the sequence is ILVLYFTVDTFVVNKKPWLPECTPVYVQYFVKF. Residues 444 to 461 traverse the membrane as a helical segment; sequence FIIGVTVLVVAVPEGLPL. Residues 462–875 are Cytoplasmic-facing; sequence AVTISLAYSV…MWGRNVYDSI (414 aa). Aspartate 499 serves as the catalytic 4-aspartylphosphate intermediate. Aspartate 820 and aspartate 824 together coordinate Mg(2+). A helical membrane pass occupies residues 876 to 895; the sequence is SKFLQFQLTVNVVAVIVAFT. At 896-905 the chain is on the extracellular side; the sequence is GACITQDSPL. The chain crosses the membrane as a helical span at residues 906–926; that stretch reads KAVQMLWVNLIMDTFASLALA. Over 927-946 the chain is Cytoplasmic; the sequence is TEPPTETLLLRKPYGRNKPL. A helical membrane pass occupies residues 947–969; that stretch reads ISRTMMKNILGHAVYQLALIFTL. Residues 970-987 lie on the Extracellular side of the membrane; sequence LFVGEKMFQIDSGRNAPL. Residues 988–1009 form a helical membrane-spanning segment; the sequence is HSPPSEHYTIIFNTFVMMQLFN. At 1010-1028 the chain is on the cytoplasmic side; that stretch reads EINARKIHGERNVFDGIFR. A helical transmembrane segment spans residues 1029 to 1050; that stretch reads NPIFCTIVLGTFAIQIVIVQFG. At 1051-1060 the chain is on the extracellular side; it reads GKPFSCSPLQ. Residues 1061–1082 traverse the membrane as a helical segment; the sequence is LDQWMWCIFIGLGELVWGQVIA. Residues 1083–1243 are Cytoplasmic-facing; the sequence is TIPTSRLKFL…SPIHSLETSL (161 aa). Residues glutamate 1120, arginine 1132, and leucine 1134 each carry the phosphoserine modification. A calmodulin-binding subdomain A region spans residues 1123–1140; the sequence is LRRGQILWFRGLNRIQTQ. Threonine 1139 carries the phosphothreonine; by PKC modification. Residues 1141-1150 are calmodulin-binding subdomain B; it reads IRVVKAFRSS. 6 positions are modified to phosphoserine: alanine 1146, leucine 1151, serine 1163, histidine 1165, aspartate 1177, and serine 1178. Threonine 1188 carries the phosphothreonine modification. A disordered region spans residues 1194–1243; it reads AALKQNSSPPSSLNKNNSAIDSGINLTTDTSKSATSSSPGSPIHSLETSL. Low complexity-rich tracts occupy residues 1196-1211 and 1220-1234; these read LKQN…KNNS and TTDT…SPGS. Residue serine 1201 is modified to Phosphoserine; by PKA. Phosphoserine is present on serine 1211.

It belongs to the cation transport ATPase (P-type) (TC 3.A.3) family. Type IIB subfamily. Interacts with PDZD11. In terms of tissue distribution, mainly expressed in brain cortex. Found in low levels in skeletal muscle, heart muscle, stomach, liver, kidney and lung. Isoforms containing segment B are found in brain cortex and at low levels in other tissues. Isoforms containing segments X and W are found at low levels in all tissues. Isoforms containing segment A and segment Z are found at low levels in skeletal muscle and heart muscle.

The protein localises to the cell membrane. Its subcellular location is the synapse. The protein resides in the apical cell membrane. It localises to the basolateral cell membrane. The catalysed reaction is Ca(2+)(in) + ATP + H2O = Ca(2+)(out) + ADP + phosphate + H(+). With respect to regulation, up-regulated by calmodulin which increases the affinity of the pump for Ca(2+) ions. In terms of biological role, ATP-driven Ca(2+) ion pump involved in the maintenance of basal intracellular Ca(2+) levels in specialized cells of cerebellar circuit and vestibular and cochlear systems. Uses ATP as an energy source to transport cytosolic Ca(2+) ions across the plasma membrane to the extracellular compartment. Has fast activation and Ca(2+) clearance rate suited to control fast neuronal Ca(2+) dynamics. At parallel fiber to Purkinje neuron synapse, mediates presynaptic Ca(2+) efflux in response to climbing fiber-induced Ca(2+) rise. Provides for fast return of Ca(2+) concentrations back to their resting levels, ultimately contributing to long-term depression induction and motor learning. Plays an essential role in hearing and balance. In cochlear hair cells, shuttles Ca(2+) ions from stereocilia to the endolymph and dissipates Ca(2+) transients generated by the opening of the mechanoelectrical transduction channels. Regulates Ca(2+) levels in the vestibular system, where it contributes to the formation of otoconia. In non-excitable cells, regulates Ca(2+) signaling through spatial control of Ca(2+) ions extrusion and dissipation of Ca(2+) transients generated by store-operated channels. In lactating mammary gland, allows for the high content of Ca(2+) ions in the milk. This is Plasma membrane calcium-transporting ATPase 2 from Homo sapiens (Human).